A 279-amino-acid chain; its full sequence is Orotidine 5'-phosphate decarboxylase (279 aa).

Substrate-binding positions include D8, K30, 58–67, T117, R177, Q186, G206, and R207; that span reads DLKIHDIPNT. K60 (proton donor) is an active-site residue.

Belongs to the OMP decarboxylase family. Type 1 subfamily. In terms of assembly, homodimer.

It carries out the reaction orotidine 5'-phosphate + H(+) = UMP + CO2. Its pathway is pyrimidine metabolism; UMP biosynthesis via de novo pathway; UMP from orotate: step 2/2. In terms of biological role, catalyzes the decarboxylation of orotidine 5'-monophosphate (OMP) to uridine 5'-monophosphate (UMP). In Campylobacter jejuni (strain RM1221), this protein is Orotidine 5'-phosphate decarboxylase.